The primary structure comprises 422 residues: Serine hydroxymethyltransferase (422 aa).

121 to 123 (GHI) is a binding site for (6S)-5,6,7,8-tetrahydrofolate. At lysine 227 the chain carries N6-(pyridoxal phosphate)lysine. Glutamate 245 is a binding site for (6S)-5,6,7,8-tetrahydrofolate.

The protein belongs to the SHMT family. In terms of assembly, homodimer. Pyridoxal 5'-phosphate serves as cofactor.

It is found in the cytoplasm. The enzyme catalyses 5,10-methylenetetrahydromethanopterin + glycine + H2O = 5,6,7,8-tetrahydromethanopterin + L-serine. It functions in the pathway amino-acid biosynthesis; glycine biosynthesis; glycine from L-serine: step 1/1. In terms of biological role, catalyzes the reversible interconversion of serine and glycine with tetrahydromethanopterin (H4MPT) serving as the one-carbon carrier. Also exhibits a pteridine-independent aldolase activity toward beta-hydroxyamino acids, producing glycine and aldehydes, via a retro-aldol mechanism. The polypeptide is Serine hydroxymethyltransferase (Methanobrevibacter smithii (strain ATCC 35061 / DSM 861 / OCM 144 / PS)).